The primary structure comprises 33 residues: MNLEVIAQLTVLSLIVLSGPLVIILLAANRGNL.

The helical transmembrane segment at 5–25 (VIAQLTVLSLIVLSGPLVIIL) threads the bilayer.

Belongs to the Psb30/Ycf12 family. PSII is composed of 1 copy each of membrane proteins PsbA, PsbB, PsbC, PsbD, PsbE, PsbF, PsbH, PsbI, PsbJ, PsbK, PsbL, PsbM, PsbT, PsbX, PsbY, PsbZ, Psb30/Ycf12, peripheral proteins of the oxygen-evolving complex and a large number of cofactors. It forms dimeric complexes.

It is found in the plastid. The protein localises to the chloroplast thylakoid membrane. Functionally, a core subunit of photosystem II (PSII), probably helps stabilize the reaction center. The polypeptide is Photosystem II reaction center protein Psb30 (Chlorokybus atmophyticus (Soil alga)).